A 409-amino-acid chain; its full sequence is MRGEQGAAGARVLQFTNCRILRGGKLLREDLWVRGGRILDPEKLFFEERRVADERRDCGGRILAPGFIDVQINGGFGVDFSQATEDVGSGVALVARRILSHGVTSFCPTLVTSPPEVYHKVVPQIPVKSGGPHGAGVLGLHLEGPFISREKRGAHPEAHLRSFEADAFQDLLATYGPLDNVRIVTLAPELGRSHEVIRALTARGICVSLGHSVADLRAAEDAVWSGATFITHLFNAMLPFHHRDPGIVGLLTSDRLPAGRCIFYGMIADGTHTNPAALRIAHRAHPQGLVLVTDAIPALGLGNGRHTLGQQEVEVDGLTAYVAGTKTLSGSIAPMDVCVRHFLQATGCSMESALEAASLHPAQLLGLEKSKGTLDFGADADFVVLDDSLHVQATYISGELVWQADAARQ.

An a divalent metal cation-binding site is contributed by Glu-143. 154 to 155 (AH) provides a ligand contact to substrate. A divalent metal cation contacts are provided by His-211 and His-232. Substrate contacts are provided by residues 235–236 (NA), Arg-243, and 269–272 (DGTH). The active-site Proton donor/acceptor is Asp-294. Substrate is bound at residue 328–330 (LSG).

This sequence belongs to the metallo-dependent hydrolases superfamily. NagA family. It depends on a divalent metal cation as a cofactor.

The enzyme catalyses N-acetyl-D-glucosamine 6-phosphate + H2O = D-glucosamine 6-phosphate + acetate. It participates in amino-sugar metabolism; N-acetylneuraminate degradation. Its function is as follows. Hydrolyzes the N-glycolyl group from N-glycolylglucosamine 6-phosphate (GlcNGc-6-P) in the N-glycolylneuraminic acid (Neu5Gc) degradation pathway. Although human is not able to catalyze formation of Neu5Gc due to the inactive CMAHP enzyme, Neu5Gc is present in food and must be degraded. In Homo sapiens (Human), this protein is N-acetylglucosamine-6-phosphate deacetylase (AMDHD2).